A 162-amino-acid chain; its full sequence is Xanthine-guanine phosphoribosyltransferase (162 aa).

Residues 43-44 (RG) and 94-102 (DDLVDTGTT) each bind 5-phospho-alpha-D-ribose 1-diphosphate. Asp-95 contacts Mg(2+). Residues Asp-98 and Ile-141 each coordinate guanine. The xanthine site is built by Asp-98 and Ile-141. GMP-binding positions include 98–102 (DTGTT) and 140–141 (WI).

The protein belongs to the purine/pyrimidine phosphoribosyltransferase family. XGPT subfamily. Homotetramer. Mg(2+) is required as a cofactor.

The protein resides in the cell inner membrane. The enzyme catalyses GMP + diphosphate = guanine + 5-phospho-alpha-D-ribose 1-diphosphate. It carries out the reaction XMP + diphosphate = xanthine + 5-phospho-alpha-D-ribose 1-diphosphate. The catalysed reaction is IMP + diphosphate = hypoxanthine + 5-phospho-alpha-D-ribose 1-diphosphate. It participates in purine metabolism; GMP biosynthesis via salvage pathway; GMP from guanine: step 1/1. Its pathway is purine metabolism; XMP biosynthesis via salvage pathway; XMP from xanthine: step 1/1. Its function is as follows. Purine salvage pathway enzyme that catalyzes the transfer of the ribosyl-5-phosphate group from 5-phospho-alpha-D-ribose 1-diphosphate (PRPP) to the N9 position of the 6-oxopurines guanine and xanthine to form the corresponding ribonucleotides GMP (guanosine 5'-monophosphate) and XMP (xanthosine 5'-monophosphate), with the release of PPi. To a lesser extent, also acts on hypoxanthine. This is Xanthine-guanine phosphoribosyltransferase from Oleidesulfovibrio alaskensis (strain ATCC BAA-1058 / DSM 17464 / G20) (Desulfovibrio alaskensis).